We begin with the raw amino-acid sequence, 254 residues long: 5'-methylthioadenosine/S-adenosylhomocysteine nucleosidase (254 aa).

Met-1 carries the post-translational modification N-acetylmethionine. Glu-25 acts as the Proton acceptor in catalysis. S-methyl-5'-thioadenosine is bound by residues Thr-103 and 186–189 (KDME). Residues Lys-186 and Asp-212 each contribute to the adenine site. Residue Asp-212 is the Proton donor of the active site.

The protein belongs to the PNP/UDP phosphorylase family. MtnN subfamily. Homodimer.

The catalysed reaction is S-methyl-5'-thioadenosine + H2O = 5-(methylsulfanyl)-D-ribose + adenine. The enzyme catalyses S-adenosyl-L-homocysteine + H2O = S-(5-deoxy-D-ribos-5-yl)-L-homocysteine + adenine. It catalyses the reaction 5'-deoxyadenosine + H2O = 5-deoxy-D-ribose + adenine. It functions in the pathway amino-acid biosynthesis; L-methionine biosynthesis via salvage pathway; S-methyl-5-thio-alpha-D-ribose 1-phosphate from S-methyl-5'-thioadenosine (hydrolase route): step 1/2. In terms of biological role, enzyme of the methionine cycle that catalyzes the irreversible cleavage of the glycosidic bond in 5'-methylthioadenosine (MTA) and S-adenosylhomocysteine (SAH/AdoHcy) to a lesser extent, to adenine and the corresponding thioribose, 5'-methylthioribose and S-ribosylhomocysteine, respectively. Contributes to the maintenance of AdoMet homeostasis and is required to sustain high rates of ethylene synthesis. The chain is 5'-methylthioadenosine/S-adenosylhomocysteine nucleosidase (MTN2) from Arabidopsis thaliana (Mouse-ear cress).